The following is a 267-amino-acid chain: O-methyltransferase (267 aa).

S-adenosyl-L-methionine contacts are provided by Gln-100 and His-145.

Belongs to the methyltransferase superfamily.

Its pathway is antifungal biosynthesis. O-methyltransferase; part of the gene cluster that mediates the biosynthesis of the tetrahydropyranyl antifungal agent lanomycin that acts as an inhibitor of CYP51 and blocks the ergosterol biosynthesis. The biosynthesis probably begins with the formation of an hexaketide, followed by methionine mediated alkylation of C-2 and C-6, and methylation of the reduced C-3 oxygen, pyran forming reductive ring closure, oxygenation of C-4, beta-keto reduction, enoyl reduction and dehydration of the remaining oxygens, and finally, acylation with glycine to complete the biosynthesis. The protein is O-methyltransferase of Pyrenophora dematioidea (Helminthosporium dematioideum).